Consider the following 437-residue polypeptide: Serine hydroxymethyltransferase (437 aa).

Residues Leu-130 and Gly-134–Leu-136 each bind (6S)-5,6,7,8-tetrahydrofolate. Lys-239 carries the post-translational modification N6-(pyridoxal phosphate)lysine. Residue Thr-363–Phe-365 participates in (6S)-5,6,7,8-tetrahydrofolate binding.

It belongs to the SHMT family. Homodimer. It depends on pyridoxal 5'-phosphate as a cofactor.

The protein localises to the cytoplasm. The enzyme catalyses (6R)-5,10-methylene-5,6,7,8-tetrahydrofolate + glycine + H2O = (6S)-5,6,7,8-tetrahydrofolate + L-serine. The protein operates within one-carbon metabolism; tetrahydrofolate interconversion. It functions in the pathway amino-acid biosynthesis; glycine biosynthesis; glycine from L-serine: step 1/1. Functionally, catalyzes the reversible interconversion of serine and glycine with tetrahydrofolate (THF) serving as the one-carbon carrier. This reaction serves as the major source of one-carbon groups required for the biosynthesis of purines, thymidylate, methionine, and other important biomolecules. Also exhibits THF-independent aldolase activity toward beta-hydroxyamino acids, producing glycine and aldehydes, via a retro-aldol mechanism. This chain is Serine hydroxymethyltransferase, found in Bartonella henselae (strain ATCC 49882 / DSM 28221 / CCUG 30454 / Houston 1) (Rochalimaea henselae).